Reading from the N-terminus, the 305-residue chain is Acetylglutamate kinase (305 aa).

Substrate is bound by residues 75–76 (GG), R97, and N202.

It belongs to the acetylglutamate kinase family. ArgB subfamily.

The protein localises to the cytoplasm. The enzyme catalyses N-acetyl-L-glutamate + ATP = N-acetyl-L-glutamyl 5-phosphate + ADP. It functions in the pathway amino-acid biosynthesis; L-arginine biosynthesis; N(2)-acetyl-L-ornithine from L-glutamate: step 2/4. Catalyzes the ATP-dependent phosphorylation of N-acetyl-L-glutamate. In Rhodospirillum centenum (strain ATCC 51521 / SW), this protein is Acetylglutamate kinase.